The chain runs to 953 residues: 2-oxoglutarate dehydrogenase E1 component (953 aa).

This sequence belongs to the alpha-ketoglutarate dehydrogenase family. Homodimer. Part of the 2-oxoglutarate dehydrogenase (OGDH) complex composed of E1 (2-oxoglutarate dehydrogenase), E2 (dihydrolipoamide succinyltransferase) and E3 (dihydrolipoamide dehydrogenase); the complex contains multiple copies of the three enzymatic components (E1, E2 and E3). Thiamine diphosphate serves as cofactor.

The enzyme catalyses N(6)-[(R)-lipoyl]-L-lysyl-[protein] + 2-oxoglutarate + H(+) = N(6)-[(R)-S(8)-succinyldihydrolipoyl]-L-lysyl-[protein] + CO2. E1 component of the 2-oxoglutarate dehydrogenase (OGDH) complex which catalyzes the decarboxylation of 2-oxoglutarate, the first step in the conversion of 2-oxoglutarate to succinyl-CoA and CO(2). The sequence is that of 2-oxoglutarate dehydrogenase E1 component from Oceanobacillus iheyensis (strain DSM 14371 / CIP 107618 / JCM 11309 / KCTC 3954 / HTE831).